The following is a 338-amino-acid chain: Heat-inducible transcription repressor HrcA (338 aa).

This sequence belongs to the HrcA family.

Functionally, negative regulator of class I heat shock genes (grpE-dnaK-dnaJ and groELS operons). Prevents heat-shock induction of these operons. In Thermotoga maritima (strain ATCC 43589 / DSM 3109 / JCM 10099 / NBRC 100826 / MSB8), this protein is Heat-inducible transcription repressor HrcA.